Here is a 315-residue protein sequence, read N- to C-terminus: Aspartate carbamoyltransferase catalytic subunit (315 aa).

Arginine 65 and threonine 66 together coordinate carbamoyl phosphate. Lysine 93 is an L-aspartate binding site. Arginine 115, histidine 145, and glutamine 148 together coordinate carbamoyl phosphate. Residues arginine 179 and arginine 234 each contribute to the L-aspartate site. Carbamoyl phosphate-binding residues include glycine 275 and proline 276.

It belongs to the aspartate/ornithine carbamoyltransferase superfamily. ATCase family. In terms of assembly, heterododecamer (2C3:3R2) of six catalytic PyrB chains organized as two trimers (C3), and six regulatory PyrI chains organized as three dimers (R2).

The catalysed reaction is carbamoyl phosphate + L-aspartate = N-carbamoyl-L-aspartate + phosphate + H(+). Its pathway is pyrimidine metabolism; UMP biosynthesis via de novo pathway; (S)-dihydroorotate from bicarbonate: step 2/3. Functionally, catalyzes the condensation of carbamoyl phosphate and aspartate to form carbamoyl aspartate and inorganic phosphate, the committed step in the de novo pyrimidine nucleotide biosynthesis pathway. In Xanthomonas campestris pv. campestris (strain 8004), this protein is Aspartate carbamoyltransferase catalytic subunit.